The chain runs to 352 residues: Protein RecA (352 aa).

64-71 (GPESSGKT) lines the ATP pocket. The segment at 328-352 (NPSSVPEAEAEHDPEQDEEPTFDLE) is disordered. Acidic residues predominate over residues 335-352 (AEAEHDPEQDEEPTFDLE).

It belongs to the RecA family.

Its subcellular location is the cytoplasm. Its function is as follows. Can catalyze the hydrolysis of ATP in the presence of single-stranded DNA, the ATP-dependent uptake of single-stranded DNA by duplex DNA, and the ATP-dependent hybridization of homologous single-stranded DNAs. It interacts with LexA causing its activation and leading to its autocatalytic cleavage. The polypeptide is Protein RecA (Brevibacillus brevis (strain 47 / JCM 6285 / NBRC 100599)).